Consider the following 130-residue polypeptide: Small ribosomal subunit protein uS8 (130 aa).

This sequence belongs to the universal ribosomal protein uS8 family. In terms of assembly, part of the 30S ribosomal subunit. Contacts proteins S5 and S12.

One of the primary rRNA binding proteins, it binds directly to 16S rRNA central domain where it helps coordinate assembly of the platform of the 30S subunit. This Stutzerimonas stutzeri (strain A1501) (Pseudomonas stutzeri) protein is Small ribosomal subunit protein uS8.